The sequence spans 140 residues: ATP synthase epsilon chain (140 aa).

Belongs to the ATPase epsilon chain family. F-type ATPases have 2 components, CF(1) - the catalytic core - and CF(0) - the membrane proton channel. CF(1) has five subunits: alpha(3), beta(3), gamma(1), delta(1), epsilon(1). CF(0) has three main subunits: a, b and c.

Its subcellular location is the cell inner membrane. Functionally, produces ATP from ADP in the presence of a proton gradient across the membrane. In Xanthomonas campestris pv. campestris (strain 8004), this protein is ATP synthase epsilon chain.